Reading from the N-terminus, the 59-residue chain is UPF0434 protein VC_1876 (59 aa).

Belongs to the UPF0434 family.

In Vibrio cholerae serotype O1 (strain ATCC 39315 / El Tor Inaba N16961), this protein is UPF0434 protein VC_1876.